The sequence spans 186 residues: dCTP deaminase (186 aa).

107-112 lines the dCTP pocket; it reads KSTYAR. Catalysis depends on E133, which acts as the Proton donor/acceptor. Residues Q152, Y166, K175, and Q176 each coordinate dCTP.

The protein belongs to the dCTP deaminase family. Homotrimer.

It carries out the reaction dCTP + H2O + H(+) = dUTP + NH4(+). It functions in the pathway pyrimidine metabolism; dUMP biosynthesis; dUMP from dCTP (dUTP route): step 1/2. Catalyzes the deamination of dCTP to dUTP. This is dCTP deaminase from Wolinella succinogenes (strain ATCC 29543 / DSM 1740 / CCUG 13145 / JCM 31913 / LMG 7466 / NCTC 11488 / FDC 602W) (Vibrio succinogenes).